A 345-amino-acid polypeptide reads, in one-letter code: Nicotinate-nucleotide--dimethylbenzimidazole phosphoribosyltransferase (345 aa).

Glu-311 (proton acceptor) is an active-site residue.

It belongs to the CobT family.

It carries out the reaction 5,6-dimethylbenzimidazole + nicotinate beta-D-ribonucleotide = alpha-ribazole 5'-phosphate + nicotinate + H(+). It functions in the pathway nucleoside biosynthesis; alpha-ribazole biosynthesis; alpha-ribazole from 5,6-dimethylbenzimidazole: step 1/2. Its function is as follows. Catalyzes the synthesis of alpha-ribazole-5'-phosphate from nicotinate mononucleotide (NAMN) and 5,6-dimethylbenzimidazole (DMB). This Janthinobacterium sp. (strain Marseille) (Minibacterium massiliensis) protein is Nicotinate-nucleotide--dimethylbenzimidazole phosphoribosyltransferase.